A 373-amino-acid chain; its full sequence is Queuine tRNA-ribosyltransferase (373 aa).

The active-site Proton acceptor is Asp-90. Substrate is bound by residues 90-94 (DSGGF), Asp-144, Gln-193, and Gly-220. The interval 251–257 (GVGTPED) is RNA binding. Asp-270 (nucleophile) is an active-site residue. The RNA binding; important for wobble base 34 recognition stretch occupies residues 275–279 (TRNAR). Cys-308, Cys-310, Cys-313, and His-339 together coordinate Zn(2+).

The protein belongs to the queuine tRNA-ribosyltransferase family. Homodimer. Within each dimer, one monomer is responsible for RNA recognition and catalysis, while the other monomer binds to the replacement base PreQ1. The cofactor is Zn(2+).

It carries out the reaction 7-aminomethyl-7-carbaguanine + guanosine(34) in tRNA = 7-aminomethyl-7-carbaguanosine(34) in tRNA + guanine. It participates in tRNA modification; tRNA-queuosine biosynthesis. Functionally, catalyzes the base-exchange of a guanine (G) residue with the queuine precursor 7-aminomethyl-7-deazaguanine (PreQ1) at position 34 (anticodon wobble position) in tRNAs with GU(N) anticodons (tRNA-Asp, -Asn, -His and -Tyr). Catalysis occurs through a double-displacement mechanism. The nucleophile active site attacks the C1' of nucleotide 34 to detach the guanine base from the RNA, forming a covalent enzyme-RNA intermediate. The proton acceptor active site deprotonates the incoming PreQ1, allowing a nucleophilic attack on the C1' of the ribose to form the product. After dissociation, two additional enzymatic reactions on the tRNA convert PreQ1 to queuine (Q), resulting in the hypermodified nucleoside queuosine (7-(((4,5-cis-dihydroxy-2-cyclopenten-1-yl)amino)methyl)-7-deazaguanosine). In Campylobacter lari (strain RM2100 / D67 / ATCC BAA-1060), this protein is Queuine tRNA-ribosyltransferase.